The sequence spans 313 residues: Non-functional target of rapamycin complex subunit LST8-2 (313 aa).

WD repeat units lie at residues 1–35 (MFENKPDDSPVYLATASHDQTIRLWQARTGRCYFS), 38–76 (YPDLHVNRLELTPEKGKLVAACNPHIRLFDLRSYNPHIP), 82–121 (SHTKNVMAVGFQYTGHMMYSGSEDGSVKIWDLRVRECQRE), 123–162 (RSVSPVNTVVLHPNQTELISGDQNGNIRVWDLRADLCSCE), 166–205 (EVGTPIRSLTVMWDGTMVVAANDRGTCYVWRSLCERQTMT), 215–255 (AHNS…LEKV), and 258–297 (GHERWVWDCDFSMDGEYLVTASSDTTARLWSMRAGKEEMV).

The protein belongs to the WD repeat LST8 family.

Its function is as follows. Probable non-functional protein. This Arabidopsis thaliana (Mouse-ear cress) protein is Non-functional target of rapamycin complex subunit LST8-2.